We begin with the raw amino-acid sequence, 237 residues long: RNA polymerase sigma-28 factor (237 aa).

Residues 1-19 constitute a propeptide that is removed on maturation; the sequence is MSLFAAIGYMVREVFVFVS. The Polymerase core binding motif lies at 77–90; that stretch reads DLISIGTIGLIKAI. The segment at residues 197–206 is a DNA-binding region (H-T-H motif); the sequence is QREIAKALGI.

This sequence belongs to the sigma-70 factor family. In terms of processing, proteolytically cleaved in the N-terminus probably by a SpoIIGA homolog to yield the active peptide.

Functionally, sigma factors are initiation factors that promote the attachment of RNA polymerase to specific initiation sites and are then released. This sigma factor directs the transcription of crystal protein genes, a sporulation-regulated event. This Bacillus thuringiensis subsp. kurstaki protein is RNA polymerase sigma-28 factor (sigK).